The following is a 216-amino-acid chain: Pyrophosphatase PpaX (216 aa).

Asp9 functions as the Nucleophile in the catalytic mechanism.

This sequence belongs to the HAD-like hydrolase superfamily. PpaX family. Requires Mg(2+) as cofactor.

It carries out the reaction diphosphate + H2O = 2 phosphate + H(+). Functionally, hydrolyzes pyrophosphate formed during P-Ser-HPr dephosphorylation by HPrK/P. Might play a role in controlling the intracellular pyrophosphate pool. The polypeptide is Pyrophosphatase PpaX (Bacillus thuringiensis (strain Al Hakam)).